The following is a 269-amino-acid chain: Glutamate racemase (269 aa).

Substrate is bound by residues 14–15 (DS) and 46–47 (YS). Cys-78 functions as the Proton donor/acceptor in the catalytic mechanism. 79–80 (NT) contributes to the substrate binding site. Catalysis depends on Cys-189, which acts as the Proton donor/acceptor. 190 to 191 (TH) is a binding site for substrate.

It belongs to the aspartate/glutamate racemases family.

The enzyme catalyses L-glutamate = D-glutamate. It participates in cell wall biogenesis; peptidoglycan biosynthesis. In terms of biological role, provides the (R)-glutamate required for cell wall biosynthesis. This Haemophilus influenzae (strain ATCC 51907 / DSM 11121 / KW20 / Rd) protein is Glutamate racemase.